A 176-amino-acid polypeptide reads, in one-letter code: MSGLFRGRVMTGLNVRIGQGYDVHAFGPGDHVMLGGVRVPHRCGVLAHSDGDVILHALCDAMLGALGLGDIGQHFPPSDVRWKGADSGVFVRHCHLLLRERDWCVGNVDATAICESPKIAPYVNAMREGIARLLEVQPECVSVKATTSEGLGFIGRGEGLAAQVVVLLYRLNGVVV.

Residues aspartate 22 and histidine 24 each coordinate a divalent metal cation. Residues 22 to 24 (DVH) and 48 to 49 (HS) contribute to the 4-CDP-2-C-methyl-D-erythritol 2-phosphate site. Histidine 56 provides a ligand contact to a divalent metal cation. 4-CDP-2-C-methyl-D-erythritol 2-phosphate-binding positions include 70–72 (DIG), 146–149 (TTSE), phenylalanine 153, and arginine 156.

It belongs to the IspF family. In terms of assembly, homotrimer. A divalent metal cation is required as a cofactor.

The catalysed reaction is 4-CDP-2-C-methyl-D-erythritol 2-phosphate = 2-C-methyl-D-erythritol 2,4-cyclic diphosphate + CMP. It functions in the pathway isoprenoid biosynthesis; isopentenyl diphosphate biosynthesis via DXP pathway; isopentenyl diphosphate from 1-deoxy-D-xylulose 5-phosphate: step 4/6. Functionally, involved in the biosynthesis of isopentenyl diphosphate (IPP) and dimethylallyl diphosphate (DMAPP), two major building blocks of isoprenoid compounds. Catalyzes the conversion of 4-diphosphocytidyl-2-C-methyl-D-erythritol 2-phosphate (CDP-ME2P) to 2-C-methyl-D-erythritol 2,4-cyclodiphosphate (ME-CPP) with a corresponding release of cytidine 5-monophosphate (CMP). This chain is 2-C-methyl-D-erythritol 2,4-cyclodiphosphate synthase, found in Xylella fastidiosa (strain 9a5c).